The sequence spans 252 residues: Type III pantothenate kinase (252 aa).

6-13 lines the ATP pocket; that stretch reads DIGNTNTV. 105–108 provides a ligand contact to substrate; that stretch reads GADR. The active-site Proton acceptor is aspartate 107. K(+) is bound at residue aspartate 127. ATP is bound at residue threonine 130. Position 182 (threonine 182) interacts with substrate.

The protein belongs to the type III pantothenate kinase family. Homodimer. It depends on NH4(+) as a cofactor. K(+) serves as cofactor.

The protein localises to the cytoplasm. It carries out the reaction (R)-pantothenate + ATP = (R)-4'-phosphopantothenate + ADP + H(+). It functions in the pathway cofactor biosynthesis; coenzyme A biosynthesis; CoA from (R)-pantothenate: step 1/5. Functionally, catalyzes the phosphorylation of pantothenate (Pan), the first step in CoA biosynthesis. This Salinispora arenicola (strain CNS-205) protein is Type III pantothenate kinase.